We begin with the raw amino-acid sequence, 407 residues long: Lysosomal phospholipase A and acyltransferase (407 aa).

The N-terminal stretch at 1–29 is a signal peptide; it reads MGCLCLYRSTLLTGGLLFLLMLADPAFPA. A substrate-binding site is contributed by aspartate 41. Residues cysteine 60 and cysteine 84 are joined by a disulfide bond. Asparagine 94 is a glycosylation site (N-linked (GlcNAc...) asparagine). The active-site Acyl-ester intermediate is serine 193. Serine 193 contributes to the Zn(2+) binding site. Substrate is bound at residue methionine 194. N-linked (GlcNAc...) asparagine glycosylation occurs at asparagine 284. Residues aspartate 355 and histidine 387 each act as charge relay system in the active site. Histidine 387 provides a ligand contact to Zn(2+). Asparagine 393 is a glycosylation site (N-linked (GlcNAc...) asparagine).

This sequence belongs to the AB hydrolase superfamily. Lipase family. Post-translationally, N-glycosylated. N-glycosylated. N-glycosylation is important for maturation of the enzyme and normal subcellular location. As to expression, detected in brain (at protein level).

The protein localises to the lysosome. The protein resides in the secreted. It is found in the membrane. It carries out the reaction a 1,2-diacyl-sn-glycero-3-phosphocholine + H2O = a 2-acyl-sn-glycero-3-phosphocholine + a fatty acid + H(+). It catalyses the reaction 1-hexadecanoyl-2-(9Z-octadecenoyl)-sn-glycero-3-phosphocholine + H2O = 2-(9Z-octadecenoyl)-sn-glycero-3-phosphocholine + hexadecanoate + H(+). The enzyme catalyses 1,2-di-(9Z-octadecenoyl)-sn-glycero-3-phosphocholine + H2O = 2-(9Z-octadecenoyl)-sn-glycero-3-phosphocholine + (9Z)-octadecenoate + H(+). The catalysed reaction is 1-hexadecanoyl-2-glutaroyl-sn-glycero-3-phosphocholine + H2O = 2-glutaroyl-sn-glycero-3-phosphocholine + hexadecanoate + H(+). It carries out the reaction 1-hexadecanoyl-2-nonadioyl-sn-glycero-3-phosphocholine + H2O = 2-nonadioyl-sn-glycero-3-phosphocholine + hexadecanoate + H(+). It catalyses the reaction 1-hexadecanoyl-2-(5-oxopentanoyl)-sn-glycero-3-phosphocholine + H2O = 2-(5-oxopentanoyl)-sn-glycero-3-phosphocholine + hexadecanoate + H(+). The enzyme catalyses 1-hexadecanoyl-2-(9-oxononanoyl)-sn-glycero-3-phosphocholine + H2O = 2-(9-oxononanoyl)-sn-glycero-3-phosphocholine + hexadecanoate + H(+). The catalysed reaction is 1,2-dihexadecanoyl-sn-glycero-3-phosphocholine + H2O = 2-hexadecanoyl-sn-glycero-3-phosphocholine + hexadecanoate + H(+). It carries out the reaction a 1,2-diacyl-sn-glycero-3-phosphocholine + H2O = a 1-acyl-sn-glycero-3-phosphocholine + a fatty acid + H(+). It catalyses the reaction 1-hexadecanoyl-2-(9Z-octadecenoyl)-sn-glycero-3-phosphocholine + H2O = 1-hexadecanoyl-sn-glycero-3-phosphocholine + (9Z)-octadecenoate + H(+). The enzyme catalyses 1,2-di-(9Z-octadecenoyl)-sn-glycero-3-phosphocholine + H2O = 1-(9Z-octadecenoyl)-sn-glycero-3-phosphocholine + (9Z)-octadecenoate + H(+). The catalysed reaction is 1,2-dihexadecanoyl-sn-glycero-3-phosphocholine + H2O = 1-hexadecanoyl-sn-glycero-3-phosphocholine + hexadecanoate + H(+). It carries out the reaction a 1-acyl-sn-glycero-3-phosphocholine + H2O = sn-glycerol 3-phosphocholine + a fatty acid + H(+). It catalyses the reaction 1-hexadecanoyl-sn-glycero-3-phosphocholine + H2O = sn-glycerol 3-phosphocholine + hexadecanoate + H(+). The enzyme catalyses N-(acetyl)-sphing-4-enine + a 1,2-diacyl-sn-glycero-3-phosphoethanolamine = 1-O-acyl-N-(acetyl)-sphing-4-enine + a 2-acyl-sn-glycero-3-phosphoethanolamine. The catalysed reaction is 1-hexadecanoyl-2-(9Z-octadecenoyl)-sn-glycero-3-phosphoethanolamine + N-(acetyl)-sphing-4-enine = 2-(9Z-octadecenoyl)-sn-glycero-3-phosphoethanolamine + 1-hexadecanoyl-N-(acetyl)-sphing-4-enine. It carries out the reaction 1-hexadecanoyl-2-(9Z,12Z-octadecadienoyl)-sn-glycero-3-phosphoethanolamine + N-(acetyl)-sphing-4-enine = 2-(9Z,12Z)-octadecadienoyl-sn-glycero-3-phosphoethanolamine + 1-hexadecanoyl-N-(acetyl)-sphing-4-enine. It catalyses the reaction 1-hexadecanoyl-2-(5Z,8Z,11Z,14Z-eicosatetraenoyl)-sn-glycero-3-phosphoethanolamine + N-(acetyl)-sphing-4-enine = 2-(5Z,8Z,11Z,14Z)-eicosatetraenoyl-sn-glycero-3-phosphoethanolamine + 1-hexadecanoyl-N-(acetyl)-sphing-4-enine. The enzyme catalyses N-(acetyl)-sphing-4-enine + a 1,2-diacyl-sn-glycero-3-phosphoethanolamine = 1-O-acyl-N-(acetyl)-sphing-4-enine + a 1-acyl-sn-glycero-3-phosphoethanolamine. The catalysed reaction is 1-hexadecanoyl-2-(9Z-octadecenoyl)-sn-glycero-3-phosphoethanolamine + N-(acetyl)-sphing-4-enine = 1-(9Z-octadecenoyl)-N-(acetyl)-sphing-4-enine + 1-hexadecanoyl-sn-glycero-3-phosphoethanolamine. It carries out the reaction 1-hexadecanoyl-2-(9Z,12Z-octadecadienoyl)-sn-glycero-3-phosphoethanolamine + N-(acetyl)-sphing-4-enine = 1-(9Z,12Z-octadecadienoyl)-N-acetylsphing-4-enine + 1-hexadecanoyl-sn-glycero-3-phosphoethanolamine. It catalyses the reaction 1-hexadecanoyl-2-(5Z,8Z,11Z,14Z-eicosatetraenoyl)-sn-glycero-3-phosphoethanolamine + N-(acetyl)-sphing-4-enine = 1-(5Z,8Z,11Z,14Z)-eicosatetraenoyl-N-(acetyl)-sphing-4-enine + 1-hexadecanoyl-sn-glycero-3-phosphoethanolamine. The enzyme catalyses N-(acetyl)-sphing-4-enine + a 1,2-diacyl-sn-glycero-3-phosphocholine = 1-O-acyl-N-(acetyl)-sphing-4-enine + a 2-acyl-sn-glycero-3-phosphocholine. The catalysed reaction is 1-hexadecanoyl-2-(9Z-octadecenoyl)-sn-glycero-3-phosphocholine + N-(acetyl)-sphing-4-enine = 1-hexadecanoyl-N-(acetyl)-sphing-4-enine + 2-(9Z-octadecenoyl)-sn-glycero-3-phosphocholine. It carries out the reaction 1-hexadecanoyl-2-(9Z,12Z-octadecadienoyl)-sn-glycero-3-phosphocholine + N-(acetyl)-sphing-4-enine = 2-(9Z,12Z-octadecadienoyl)-sn-glycero-3-phosphocholine + 1-hexadecanoyl-N-(acetyl)-sphing-4-enine. It catalyses the reaction 1-hexadecanoyl-2-(5Z,8Z,11Z,14Z-eicosatetraenoyl)-sn-glycero-3-phosphocholine + N-(acetyl)-sphing-4-enine = 1-hexadecanoyl-N-(acetyl)-sphing-4-enine + 2-(5Z,8Z,11Z,14Z)-eicosatetraenoyl-sn-glycero-3-phosphocholine. The enzyme catalyses 1-hexadecanoyl-2-(4Z,7Z,10Z,13Z,16Z,19Z-docosahexaenoyl)-sn-glycero-3-phosphocholine + N-(acetyl)-sphing-4-enine = 2-(4Z,7Z,10Z,13Z,16Z,19Z-docosahexaenoyl)-sn-glycero-3-phosphocholine + 1-hexadecanoyl-N-(acetyl)-sphing-4-enine. The catalysed reaction is 1-hexadecanoyl-2-nonadioyl-sn-glycero-3-phosphocholine + N-(acetyl)-sphing-4-enine = 2-nonadioyl-sn-glycero-3-phosphocholine + 1-hexadecanoyl-N-(acetyl)-sphing-4-enine. It carries out the reaction 1-octadecanoyl-2-(9Z-octadecenoyl)-sn-glycero-3-phosphocholine + N-(acetyl)-sphing-4-enine = 1-octadecanoyl-N-(acetyl)-sphing-4-enine + 2-(9Z-octadecenoyl)-sn-glycero-3-phosphocholine. It catalyses the reaction 1-(9Z)-octadecenoyl-2-octadecanoyl-sn-glycero-3-phosphocholine + N-(acetyl)-sphing-4-enine = 2-octadecanoyl-sn-glycero-3-phosphocholine + 1-(9Z-octadecenoyl)-N-(acetyl)-sphing-4-enine. The enzyme catalyses 1-octadecanoyl-2-(5Z,8Z,11Z,14Z-eicosatetraenoyl)-sn-glycero-3-phosphocholine + N-(acetyl)-sphing-4-enine = 1-octadecanoyl-N-(acetyl)-sphing-4-enine + 2-(5Z,8Z,11Z,14Z)-eicosatetraenoyl-sn-glycero-3-phosphocholine. The catalysed reaction is 1-(9Z-octadecenoyl)-2-hexadecanoyl-sn-glycero-3-phosphocholine + N-(acetyl)-sphing-4-enine = 1-(9Z-octadecenoyl)-N-(acetyl)-sphing-4-enine + 2-hexadecanoyl-sn-glycero-3-phosphocholine. It carries out the reaction N-(acetyl)-sphing-4-enine + a 1,2-diacyl-sn-glycero-3-phosphocholine = 1-O-acyl-N-(acetyl)-sphing-4-enine + a 1-acyl-sn-glycero-3-phosphocholine. It catalyses the reaction 1-hexadecanoyl-2-(9Z-octadecenoyl)-sn-glycero-3-phosphocholine + N-(acetyl)-sphing-4-enine = 1-(9Z-octadecenoyl)-N-(acetyl)-sphing-4-enine + 1-hexadecanoyl-sn-glycero-3-phosphocholine. The enzyme catalyses 1-hexadecanoyl-2-(9Z,12Z-octadecadienoyl)-sn-glycero-3-phosphocholine + N-(acetyl)-sphing-4-enine = 1-(9Z,12Z-octadecadienoyl)-N-acetylsphing-4-enine + 1-hexadecanoyl-sn-glycero-3-phosphocholine. The catalysed reaction is 1-hexadecanoyl-2-(5Z,8Z,11Z,14Z-eicosatetraenoyl)-sn-glycero-3-phosphocholine + N-(acetyl)-sphing-4-enine = 1-(5Z,8Z,11Z,14Z)-eicosatetraenoyl-N-(acetyl)-sphing-4-enine + 1-hexadecanoyl-sn-glycero-3-phosphocholine. It carries out the reaction 1-hexadecanoyl-2-(4Z,7Z,10Z,13Z,16Z,19Z-docosahexaenoyl)-sn-glycero-3-phosphocholine + N-(acetyl)-sphing-4-enine = 1-(4Z,7Z,10Z,13Z,16Z,19Z-docosahexaenoyl)-N-(acetyl)-sphing-4-enine + 1-hexadecanoyl-sn-glycero-3-phosphocholine. It catalyses the reaction 1-octadecanoyl-2-(9Z-octadecenoyl)-sn-glycero-3-phosphocholine + N-(acetyl)-sphing-4-enine = 1-(9Z-octadecenoyl)-N-(acetyl)-sphing-4-enine + 1-octadecanoyl-sn-glycero-3-phosphocholine. The enzyme catalyses 1-octadecanoyl-2-(9Z,12Z)-octadecadienoyl-sn-glycero-3-phosphocholine + N-(acetyl)-sphing-4-enine = 1-(9Z,12Z-octadecadienoyl)-N-acetylsphing-4-enine + 1-octadecanoyl-sn-glycero-3-phosphocholine. The catalysed reaction is 1-(9Z-octadecenoyl)-2-hexadecanoyl-sn-glycero-3-phosphocholine + N-(acetyl)-sphing-4-enine = 1-hexadecanoyl-N-(acetyl)-sphing-4-enine + 1-(9Z-octadecenoyl)-sn-glycero-3-phosphocholine. It carries out the reaction 1-(9Z)-octadecenoyl-2-octadecanoyl-sn-glycero-3-phosphocholine + N-(acetyl)-sphing-4-enine = 1-octadecanoyl-N-(acetyl)-sphing-4-enine + 1-(9Z-octadecenoyl)-sn-glycero-3-phosphocholine. It catalyses the reaction 1,2-di-(9Z-octadecenoyl)-sn-glycero-3-phosphocholine + N-(acetyl)-sphing-4-enine = 1-(9Z-octadecenoyl)-N-(acetyl)-sphing-4-enine + 1-(9Z-octadecenoyl)-sn-glycero-3-phosphocholine. The enzyme catalyses 1-octadecanoyl-2-(5Z,8Z,11Z,14Z-eicosatetraenoyl)-sn-glycero-3-phosphocholine + N-(acetyl)-sphing-4-enine = 1-(5Z,8Z,11Z,14Z)-eicosatetraenoyl-N-(acetyl)-sphing-4-enine + 1-octadecanoyl-sn-glycero-3-phosphocholine. The catalysed reaction is a 1,2-diacyl-sn-glycero-3-phospho-L-serine + N-(acetyl)-sphing-4-enine = a 2-acyl-sn-glycero-3-phospho-L-serine + 1-O-acyl-N-(acetyl)-sphing-4-enine. It carries out the reaction 1-octadecanoyl-2-(9Z-octadecenoyl)-sn-glycero-3-phospho-L-serine + N-(acetyl)-sphing-4-enine = 2-(9Z-octadecenoyl)-sn-glycero-3-phospho-L-serine + 1-octadecanoyl-N-(acetyl)-sphing-4-enine. It catalyses the reaction a 1,2-diacyl-sn-glycero-3-phospho-L-serine + N-(acetyl)-sphing-4-enine = 1-O-acyl-N-(acetyl)-sphing-4-enine + a 1-acyl-sn-glycero-3-phospho-L-serine. The enzyme catalyses 1-octadecanoyl-2-(9Z-octadecenoyl)-sn-glycero-3-phospho-L-serine + N-(acetyl)-sphing-4-enine = 1-octadecanoyl-sn-glycero-3-phosphoserine + 1-(9Z-octadecenoyl)-N-(acetyl)-sphing-4-enine. The catalysed reaction is a 1,2-diacyl-sn-glycero-3-phospho-(1'-sn-glycerol) + N-(acetyl)-sphing-4-enine = 2-acyl-sn-glycero-3-phospho-(1'-sn-glycerol) + 1-O-acyl-N-(acetyl)-sphing-4-enine. It carries out the reaction 1-octadecanoyl-2-(9Z-octadecenoyl)-sn-glycero-3-phospho-(1'-sn-glycerol) + N-(acetyl)-sphing-4-enine = 2-(9Z-octadecenoyl)-sn-glycero-3-phospho-(1'-sn-glycerol) + 1-octadecanoyl-N-(acetyl)-sphing-4-enine. It catalyses the reaction a 1,2-diacyl-sn-glycero-3-phospho-(1'-sn-glycerol) + N-(acetyl)-sphing-4-enine = 1-O-acyl-N-(acetyl)-sphing-4-enine + 1-acyl-sn-glycero-3-phospho-(1'-sn-glycerol). The enzyme catalyses 1-octadecanoyl-2-(9Z-octadecenoyl)-sn-glycero-3-phospho-(1'-sn-glycerol) + N-(acetyl)-sphing-4-enine = 1-octadecanoyl-sn-glycero-3-phospho-(1'-sn-glycerol) + 1-(9Z-octadecenoyl)-N-(acetyl)-sphing-4-enine. The catalysed reaction is an N-acylethanolamine + a 1,2-diacyl-sn-glycero-3-phosphocholine = 2-(acylamino)ethyl fatty acid + a 2-acyl-sn-glycero-3-phosphocholine. It carries out the reaction an N-acylethanolamine + a 1,2-diacyl-sn-glycero-3-phosphocholine = 2-(acylamino)ethyl fatty acid + a 1-acyl-sn-glycero-3-phosphocholine. It catalyses the reaction N-(5Z,8Z,11Z,14Z-eicosatetraenoyl)-ethanolamine + 1,2-di-(9Z-octadecenoyl)-sn-glycero-3-phosphocholine = 2-[(5Z,8Z,11Z,14Z)-eicosatetraenoylamino]ethyl (9Z)-octadecenoate + (9Z-octadecenoyl)-sn-glycero-3-phosphocholine. The enzyme catalyses N-(9Z-octadecenoyl) ethanolamine + 1,2-di-(9Z-octadecenoyl)-sn-glycero-3-phosphocholine = 2-[(9Z)-octadecenoylamino]ethyl (9Z)-octadecenoate + (9Z-octadecenoyl)-sn-glycero-3-phosphocholine. The catalysed reaction is a 3-acyl-sn-glycerol + a 1,2-diacyl-sn-glycero-3-phosphocholine = a 1,3-diacylglycerol + a 1-acyl-sn-glycero-3-phosphocholine. It carries out the reaction a 3-acyl-sn-glycerol + a 1,2-diacyl-sn-glycero-3-phosphocholine = a 1,3-diacylglycerol + a 2-acyl-sn-glycero-3-phosphocholine. It catalyses the reaction 3-(9Z-octadecenoyl)-sn-glycerol + 1,2-di-(9Z-octadecenoyl)-sn-glycero-3-phosphocholine = 1,3-di-(9Z-octadecenoyl)-glycerol + (9Z-octadecenoyl)-sn-glycero-3-phosphocholine. The enzyme catalyses 3-hexadecanoyl-sn-glycerol + 1,2-di-(9Z-octadecenoyl)-sn-glycero-3-phosphocholine = 1-(9Z)-octadecenoyl-3-hexadecanoyl-sn-glycerol + (9Z-octadecenoyl)-sn-glycero-3-phosphocholine. The catalysed reaction is a 1-acyl-sn-glycerol + a 1,2-diacyl-sn-glycero-3-phosphocholine = a 1,3-diacylglycerol + a 2-acyl-sn-glycero-3-phosphocholine. It carries out the reaction a 1-acyl-sn-glycerol + a 1,2-diacyl-sn-glycero-3-phosphocholine = a 1,3-diacylglycerol + a 1-acyl-sn-glycero-3-phosphocholine. It catalyses the reaction 1-(9Z-octadecenoyl)-sn-glycerol + 1,2-di-(9Z-octadecenoyl)-sn-glycero-3-phosphocholine = 1,3-di-(9Z-octadecenoyl)-glycerol + (9Z-octadecenoyl)-sn-glycero-3-phosphocholine. The enzyme catalyses 1-hexadecanoyl-sn-glycerol + 1,2-di-(9Z-octadecenoyl)-sn-glycero-3-phosphocholine = 1-hexadecanoyl-3-(9Z)-octadecenoyl-sn-glycerol + (9Z-octadecenoyl)-sn-glycero-3-phosphocholine. The catalysed reaction is a 2-acylglycerol + a 1,2-diacyl-sn-glycero-3-phosphocholine = a 1,2-diacylglycerol + a 2-acyl-sn-glycero-3-phosphocholine. It carries out the reaction a 2-acylglycerol + a 1,2-diacyl-sn-glycero-3-phosphocholine = a 1,2-diacylglycerol + a 1-acyl-sn-glycero-3-phosphocholine. It catalyses the reaction 2-hexadecanoylglycerol + 1,2-di-(9Z-octadecenoyl)-sn-glycero-3-phosphocholine = 1-(9Z)-octadecenoyl-2-hexadecanoylglycerol + (9Z-octadecenoyl)-sn-glycero-3-phosphocholine. The enzyme catalyses 1-O-alkylglycerol + a 1,2-diacyl-sn-glycero-3-phosphocholine = 1-O-alkyl-3-acylglycerol + a 1-acyl-sn-glycero-3-phosphocholine. The catalysed reaction is 1-O-alkylglycerol + a 1,2-diacyl-sn-glycero-3-phosphocholine = 1-O-alkyl-3-acylglycerol + a 2-acyl-sn-glycero-3-phosphocholine. It carries out the reaction 1-O-hexadecylglycerol + 1,2-di-(9Z-octadecenoyl)-sn-glycero-3-phosphocholine = 1-O-hexadecyl-3-(9Z)-octadecenoylglycerol + (9Z-octadecenoyl)-sn-glycero-3-phosphocholine. It catalyses the reaction 1-O-alkyl-2-acyl-sn-glycerol + a 1,2-diacyl-sn-glycero-3-phosphocholine = 1-O-alkyl-2,3-diacyl-sn-glycerol + a 2-acyl-sn-glycero-3-phosphocholine. The enzyme catalyses 1-O-alkyl-2-acyl-sn-glycerol + a 1,2-diacyl-sn-glycero-3-phosphocholine = 1-O-alkyl-2,3-diacyl-sn-glycerol + a 1-acyl-sn-glycero-3-phosphocholine. The catalysed reaction is 1-O-hexadecyl-2-acetyl-sn-glycerol + 1,2-di-(9Z-octadecenoyl)-sn-glycero-3-phosphocholine = 1-O-hexadecyl-2-acetyl-3-(9Z)-octadecenoyl-sn-glycerol + (9Z-octadecenoyl)-sn-glycero-3-phosphocholine. It carries out the reaction 1-O-hexadecyl-2-O-methyl-sn-glycerol + 1,2-di-(9Z-octadecenoyl)-sn-glycero-3-phosphocholine = 1-O-hexadecyl-2-O-methyl-3-(9Z)-octadecenoyl-sn-glycerol + (9Z-octadecenoyl)-sn-glycero-3-phosphocholine. It catalyses the reaction a 1,2-diacyl-sn-glycero-3-phosphoethanolamine + H2O = a 1-acyl-sn-glycero-3-phosphoethanolamine + a fatty acid + H(+). The enzyme catalyses 1-acyl-2-(5Z,8Z,11Z,14Z)-eicosatetraenoyl-sn-glycero-3-phosphoethanolamine + H2O = a 1-acyl-sn-glycero-3-phosphoethanolamine + (5Z,8Z,11Z,14Z)-eicosatetraenoate + H(+). The catalysed reaction is a 1,2-diacyl-sn-glycero-3-phospho-(1'-sn-glycerol) + H2O = 1-acyl-sn-glycero-3-phospho-(1'-sn-glycerol) + a fatty acid + H(+). It carries out the reaction 1-hexadecanoyl-2-(9Z-octadecenoyl)-sn-glycero-3-phospho-(1'-sn-glycerol) + H2O = 1-hexadecanoyl-sn-glycero-3-phospho-(1'-sn-glycerol) + (9Z)-octadecenoate + H(+). It catalyses the reaction a 1,2-diacyl-sn-glycero-3-phospho-(1'-sn-glycerol) + H2O = 2-acyl-sn-glycero-3-phospho-(1'-sn-glycerol) + a fatty acid + H(+). The enzyme catalyses 1-hexadecanoyl-2-(9Z-octadecenoyl)-sn-glycero-3-phospho-(1'-sn-glycerol) + H2O = 2-(9Z-octadecenoyl)-sn-glycero-3-phospho-(1'-sn-glycerol) + hexadecanoate + H(+). With respect to regulation, transacylase activity is completely inhibited by Triton X-100 and partially inhibited by heparin. Moderately activated by Mg(2+) and Ca(2+). Functionally, has dual calcium-independent phospholipase and O-acyltransferase activities with a potential role in glycerophospholipid homeostasis and remodeling of acyl groups of lipophilic alcohols present in acidic cellular compartments. Catalyzes hydrolysis of the ester bond of the fatty acyl group attached at sn-1 or sn-2 position of phospholipids (phospholipase A1 or A2 activity) and transfer it to the hydroxyl group at the first carbon of lipophilic alcohols (O-acyltransferase activity). Among preferred fatty acyl donors are phosphatidylcholines, phosphatidylethanolamines, phosphatidylglycerols and phosphatidylserines. Favors sn-2 over sn-1 deacylation of unsaturated fatty acyl groups of phosphatidylcholines, phosphatidylethanolamines, and phosphatidylglycerols. Among preferred fatty acyl acceptors are natural lipophilic alcohols including short-chain ceramide N-acetyl-sphingosine (C2 ceramide), alkylacylglycerols, monoacylglycerols, and acylethanolamides such as anandamide and oleoylethanolamide. Selectively hydrolyzes the sn-1 fatty acyl group of truncated oxidized phospholipids and may play a role in detoxification of reactive oxidized phospholipids during oxidative stress. Required for normal phospholipid degradation in alveolar macrophages with potential implications in the clearance of pulmonary surfactant, which is mainly composed of dipalmitoylphosphatidylcholine (1,2-dihexadecanoyl-sn-glycero-3-phosphocholine). Involved in the first step of bis(monoacylglycero)phosphate (BMP) de novo synthesis from phosphatidylglycerol (1,2-diacyl-sn-glycero-3-phospho-(1'-sn-glycerol), PG). BMP is an important player in cargo sorting and degradation, regulation of cellular cholesterol levels and intercellular communication. At neutral pH, hydrolyzes the sn-1 fatty acyl group of the lysophosphatidylcholines. The sequence is that of Lysosomal phospholipase A and acyltransferase (PLA2G15) from Bos taurus (Bovine).